The primary structure comprises 63 residues: Cytochrome c oxidase subunit 5C (63 aa).

Residues 16-34 (VVKEICIGLTLGLVAGGLW) form a helical membrane-spanning segment.

It belongs to the cytochrome c oxidase subunit 5C family.

It localises to the mitochondrion inner membrane. Functionally, this protein is one of the nuclear-coded polypeptide chains of cytochrome c oxidase, the terminal oxidase in mitochondrial electron transport. The polypeptide is Cytochrome c oxidase subunit 5C (COX5C) (Oryza sativa subsp. japonica (Rice)).